Here is a 540-residue protein sequence, read N- to C-terminus: MAKMIAFDEEARRGLERGMNQLADAVKVTLGPKGRNVVLEKKWGAPTITNDGVSIAKEIELEDPYEKIGAELVKEVAKKTDDVAGDGTTTATVLAQAMVREGLRNVAAGANPMALKRGIETAVASVSEELLKLAKDVETKEQIASTASISAGDPSVGEIIAEAMDKVGKEGVITVEESNTFGLELELTEGMRFDKGYISAYFMTDPERMEAVFDDPYILIVNSKISSVKDLLPILEKVMQSGKPLLIIAEDIEGEALATLVVNKVRGTFKSVAVKAPGFGDRRKAMLGDIAILTGGQVISEEVGLKLDAVNLDMVGRARKVVVTKDETTIVDGAGDAEQIQGRVNQIRAEIDKSDSDYDREKLQERLAKLAGGVAVIKVGAATEVELKERKHRIEDAVRNAKAAVEEGIVPGGGVALVQAGKTAFDKLDLTGDEATGAQIVKIALDGPLRQIAVNAGLEGGVVVEHVRGIEAGHGLNAATGGYVDLMAAGIIDPAKVTRSALQNASSIAALFLTTEAVVADKPEKTPAAPAAPGGGEMDF.

ATP-binding positions include Thr29–Pro32, Asp86–Thr90, Gly413, Asn477–Ala479, and Asp493.

Belongs to the chaperonin (HSP60) family. In terms of assembly, forms a cylinder of 14 subunits composed of two heptameric rings stacked back-to-back. Interacts with the co-chaperonin GroES.

It localises to the cytoplasm. The enzyme catalyses ATP + H2O + a folded polypeptide = ADP + phosphate + an unfolded polypeptide.. Together with its co-chaperonin GroES, plays an essential role in assisting protein folding. The GroEL-GroES system forms a nano-cage that allows encapsulation of the non-native substrate proteins and provides a physical environment optimized to promote and accelerate protein folding. The polypeptide is Chaperonin GroEL 1 (Salinispora arenicola (strain CNS-205)).